Here is a 211-residue protein sequence, read N- to C-terminus: FMN-dependent NADH:quinone oxidoreductase 2 (211 aa).

102-105 (MWNF) serves as a coordination point for FMN.

This sequence belongs to the azoreductase type 1 family. As to quaternary structure, homodimer. FMN serves as cofactor.

The catalysed reaction is 2 a quinone + NADH + H(+) = 2 a 1,4-benzosemiquinone + NAD(+). It catalyses the reaction N,N-dimethyl-1,4-phenylenediamine + anthranilate + 2 NAD(+) = 2-(4-dimethylaminophenyl)diazenylbenzoate + 2 NADH + 2 H(+). Functionally, quinone reductase that provides resistance to thiol-specific stress caused by electrophilic quinones. Also exhibits azoreductase activity. Catalyzes the reductive cleavage of the azo bond in aromatic azo compounds to the corresponding amines. In Bacillus thuringiensis subsp. konkukian (strain 97-27), this protein is FMN-dependent NADH:quinone oxidoreductase 2.